Reading from the N-terminus, the 35-residue chain is Photosystem II reaction center protein T (35 aa).

The chain crosses the membrane as a helical span at residues 3 to 23 (ALVYTFLLIGTLGIIFFAIFF).

Belongs to the PsbT family. PSII is composed of 1 copy each of membrane proteins PsbA, PsbB, PsbC, PsbD, PsbE, PsbF, PsbH, PsbI, PsbJ, PsbK, PsbL, PsbM, PsbT, PsbY, PsbZ, Psb30/Ycf12, at least 3 peripheral proteins of the oxygen-evolving complex and a large number of cofactors. It forms dimeric complexes.

Its subcellular location is the plastid. The protein resides in the chloroplast thylakoid membrane. Functionally, found at the monomer-monomer interface of the photosystem II (PS II) dimer, plays a role in assembly and dimerization of PSII. PSII is a light-driven water plastoquinone oxidoreductase, using light energy to abstract electrons from H(2)O, generating a proton gradient subsequently used for ATP formation. This Coleochaete orbicularis (Charophycean green alga) protein is Photosystem II reaction center protein T.